We begin with the raw amino-acid sequence, 492 residues long: 3-octaprenyl-4-hydroxybenzoate carboxy-lyase (492 aa).

Asn-177 is a Mn(2+) binding site. Prenylated FMN contacts are provided by residues 180 to 182 (IYR), 194 to 196 (RWL), and 199 to 200 (RG). Glu-243 is a Mn(2+) binding site. Asp-292 serves as the catalytic Proton donor.

Belongs to the UbiD family. As to quaternary structure, homohexamer. Requires prenylated FMN as cofactor. Mn(2+) is required as a cofactor.

Its subcellular location is the cell membrane. It carries out the reaction a 4-hydroxy-3-(all-trans-polyprenyl)benzoate + H(+) = a 2-(all-trans-polyprenyl)phenol + CO2. The protein operates within cofactor biosynthesis; ubiquinone biosynthesis. Catalyzes the decarboxylation of 3-octaprenyl-4-hydroxy benzoate to 2-octaprenylphenol, an intermediate step in ubiquinone biosynthesis. The polypeptide is 3-octaprenyl-4-hydroxybenzoate carboxy-lyase (Neisseria meningitidis serogroup C / serotype 2a (strain ATCC 700532 / DSM 15464 / FAM18)).